The sequence spans 449 residues: Jacalin-related lectin 20 (449 aa).

Disordered regions lie at residues 1–20 (MAQR…DDGA) and 294–314 (APPI…GDGG). Ala2 is modified (N-acetylalanine). 3 consecutive Jacalin-type lectin domains span residues 2-144 (AQRL…YFTP), 147-294 (PIKQ…HFGA), and 303-446 (TEKL…TVAP).

This sequence belongs to the jacalin lectin family.

This Arabidopsis thaliana (Mouse-ear cress) protein is Jacalin-related lectin 20 (JAL20).